The primary structure comprises 432 residues: MAVSEIKATMKLKPLKAPVFHKRDKDLRGSFSDHLKHKESKLSPAQLEAFRNAYNFFTKDRTGCIDSHGLISTIAKLGMNLNTYDIYNELKCADLDRDGKINFSDFINVLTDKKLFLKAVVPEKKICLDLANNPGILLFEILSKFVETSSLHRKDIIELVSYFRKRFQESHSEIMWSSYGRRGLKSEICSPPRSSTAAFANSARISIMKERDLYKFLEALKRCNLRTDSPYSKIPVFPLFPDVDGTVMGKPFKDTQKIEMLRRKEPLTFFEDYFFNKRDWKTQAMNVKPLKSASGYSDDILAIDHLFKKKQHWTVTDAAAIKQHVKKATESYNLGIALDHRKEMLNLWKKIRGDLVGIESNNESFYNTFSTYTWSWNVCQELLSAKDLRLHDASMNKSSPSNSGLSSPSDFSESDPETGRKRKRKSSRGFRQ.

EF-hand domains follow at residues 45–80 (AQLE…LGMN) and 81–116 (LNTY…KKLF). Residues Asp-94, Asp-96, Asp-98, Lys-100, and Asp-105 each coordinate Ca(2+). Tyr-273 is modified (phosphotyrosine). Residues 394–432 (SMNKSSPSNSGLSSPSDFSESDPETGRKRKRKSSRGFRQ) form a disordered region. The span at 395 to 411 (MNKSSPSNSGLSSPSDF) shows a compositional bias: low complexity. Positions 420–432 (RKRKRKSSRGFRQ) are enriched in basic residues.

The chain is EF-hand calcium-binding domain-containing protein 3 (Efcab3) from Mus musculus (Mouse).